The primary structure comprises 460 residues: Cysteine--tRNA ligase (460 aa).

Zn(2+) is bound at residue Cys-28. The 'HIGH' region signature appears at 30–40 (MTVYDYCHLGH). Zn(2+) is bound by residues Cys-209, His-234, and Glu-238. The short motif at 266–270 (KMSKS) is the 'KMSKS' region element. Lys-269 contributes to the ATP binding site.

It belongs to the class-I aminoacyl-tRNA synthetase family. Monomer. Requires Zn(2+) as cofactor.

The protein resides in the cytoplasm. It catalyses the reaction tRNA(Cys) + L-cysteine + ATP = L-cysteinyl-tRNA(Cys) + AMP + diphosphate. In Pseudomonas putida (strain ATCC 47054 / DSM 6125 / CFBP 8728 / NCIMB 11950 / KT2440), this protein is Cysteine--tRNA ligase.